A 175-amino-acid polypeptide reads, in one-letter code: Calcineurin subunit B (175 aa).

EF-hand domains follow at residues 21–56 (AEIE…SANP), 58–88 (AKRI…FSGR), 90–125 (ETDA…MVGT), and 131–166 (QLQQ…TEVI). Ca(2+) contacts are provided by Asp-34, Asp-36, Ser-38, Ser-40, Glu-45, Asp-66, Asp-68, Ser-70, Asp-72, Glu-77, Asp-103, Asp-105, Asp-107, Tyr-109, Glu-114, Asp-144, Asp-146, Asp-148, Lys-150, and Glu-155.

The protein belongs to the calcineurin regulatory subunit family. Composed of a catalytic subunit (A) and a regulatory subunit (B).

Functionally, regulatory subunit of calcineurin, a calcium-dependent, calmodulin stimulated protein phosphatase. Confers calcium sensitivity. The chain is Calcineurin subunit B (CNB1) from Kluyveromyces lactis (strain ATCC 8585 / CBS 2359 / DSM 70799 / NBRC 1267 / NRRL Y-1140 / WM37) (Yeast).